A 379-amino-acid polypeptide reads, in one-letter code: Putative phosphatidate phosphatase (379 aa).

The disordered stretch occupies residues 1–53; that stretch reads MPAVKIIMSTETSASETTPLRRSENETPDHKELAQSNSNSRQTTVNSNNNNYS. The span at 9–18 shows a compositional bias: polar residues; it reads STETSASETT. Over residues 19-33 the composition is skewed to basic and acidic residues; sequence PLRRSENETPDHKEL. Positions 35 to 53 are enriched in low complexity; the sequence is QSNSNSRQTTVNSNNNNYS. A glycan (N-linked (GlcNAc...) asparagine) is linked at N51. The next 2 membrane-spanning stretches (helical) occupy residues 90-110 and 138-158; these read VGLD…FFLL and MLYF…EVII. N169 carries N-linked (GlcNAc...) asparagine glycosylation. Helical transmembrane passes span 266 to 286 and 330 to 350; these read SFPS…ALYL and AGSL…SDLF.

Belongs to the PA-phosphatase related phosphoesterase family. In terms of assembly, homodimer. This complex seems not to be involved in substrate recognition, it may confer only structural or functional stability. As to expression, expressed in embryonic gut in a pattern that guides germ cells towards mesoderm (initially in hindgut and then on lower side of gut). During extended germ band stage, expressed in ectoderm as a medial band throughout the trunk.

The protein localises to the membrane. The catalysed reaction is a 1,2-diacyl-sn-glycero-3-phosphate + H2O = a 1,2-diacyl-sn-glycerol + phosphate. Responsible for guiding the germ cells early in the process of migration from the lumen of the developing gut towards the overlying mesoderm, where the germ cells enter the gonads. May be involved in lipid metabolism. The sequence is that of Putative phosphatidate phosphatase (wun) from Drosophila melanogaster (Fruit fly).